Here is a 136-residue protein sequence, read N- to C-terminus: Histone H3 (136 aa).

A disordered region spans residues 1 to 43 (MARTKQTARKSTGGKAPRKQLATKAARKSAPASGGVKKPHRFR). K5 carries the N6-methylated lysine modification. Residue K10 is modified to N6-acetyllysine; alternate. Residue K10 is modified to N6-methylated lysine; alternate. S11 is modified (phosphoserine). T12 bears the Phosphothreonine mark. Position 15 is an N6-acetyllysine (K15). Residues K19 and K24 each carry the N6-acetyllysine; alternate modification. N6-methylated lysine; alternate is present on residues K19 and K24. At K28 the chain carries N6-methylated lysine. Residue S29 is modified to Phosphoserine. K37 bears the N6-methylated lysine mark.

It belongs to the histone H3 family. In terms of assembly, the nucleosome is a histone octamer containing two molecules each of H2A, H2B, H3 and H4 assembled in one H3-H4 heterotetramer and two H2A-H2B heterodimers. The octamer wraps approximately 147 bp of DNA. In terms of processing, acetylation is generally linked to gene activation. Can be acetylated to form H3K9ac, H3K14ac, H3K18ac and H3K23ac. H3K9ac could compete with H3K9me and prevent gene silencing. H3K9ac is restricted to euchromatin. Post-translationally, methylated to form mainly H3K4me, H3K9me, H3K18me, H3K23me, H3K27me and H3K36me. H3K4me1/2/3, H3K9me3, H3K27me3 and H3K36me1/2/3 are typical marks for euchromatin, whereas heterochromatic chromocenters are enriched in H3K9me1/2 and H3K27me1/2. H2BK143ub1 is probably prerequisite for H3K4me. Can be phosphorylated to form H3S10ph, H3T11ph and H3S28ph.

The protein localises to the nucleus. It is found in the chromosome. Its function is as follows. Core component of nucleosome. Nucleosomes wrap and compact DNA into chromatin, limiting DNA accessibility to the cellular machineries which require DNA as a template. Histones thereby play a central role in transcription regulation, DNA repair, DNA replication and chromosomal stability. DNA accessibility is regulated via a complex set of post-translational modifications of histones, also called histone code, and nucleosome remodeling. The protein is Histone H3 of Griffithsia japonica (Red alga).